Consider the following 308-residue polypeptide: 1-acyl-sn-glycerol-3-phosphate acyltransferase (308 aa).

The next 3 membrane-spanning stretches (helical) occupy residues 65-85, 124-144, and 148-168; these read FLSMMVTTIVWNMIMLILLPW, AIYICNHASLVDIFLIMWLIP, and VTIAKKEIIWYPLFGQLYVLA. The HXXXXD motif motif lies at 130–135; the sequence is HASLVD.

The protein belongs to the 1-acyl-sn-glycerol-3-phosphate acyltransferase family.

It is found in the membrane. It catalyses the reaction a 1-acyl-sn-glycero-3-phosphate + an acyl-CoA = a 1,2-diacyl-sn-glycero-3-phosphate + CoA. Functionally, converts lysophosphatidic acid (LPA) into phosphatidic acid by incorporating acyl moiety at the 2 position. This enzyme shows a preference for medium-chain-length fatty acyl-coenzyme a substrates. In Cocos nucifera (Coconut palm), this protein is 1-acyl-sn-glycerol-3-phosphate acyltransferase.